Consider the following 298-residue polypeptide: MQLLKASDIISHLQIDGIFPGGNAIPCTHLNNYMNIKEKQLMNTIADVQSSRDLRNLPINQVGIKDLRFPITLQTAEGIQSTIARLTMTVYLPAEQKGTHMSRFVALMEQYSEALDFAQLHRLTAEMVALLDSRAGKISVSFPFFRKKTAPVSGIQSLLDYDVCLTGEMKDGAYGHSMKVMIPVTSLCPCSKEISQYGAHNQRSHVTVSLTADAEVGIEEVIDYVEAQASCQLYGLLKRPDEKYVTEKAYENPKFVEDMVRDVATSLIADKRIKSFVVESENFESIHNHSAYAYIAYP.

Belongs to the GTP cyclohydrolase IV family.

It catalyses the reaction GTP + H2O = 7,8-dihydroneopterin 3'-triphosphate + formate + H(+). It functions in the pathway cofactor biosynthesis; 7,8-dihydroneopterin triphosphate biosynthesis; 7,8-dihydroneopterin triphosphate from GTP: step 1/1. Its function is as follows. Converts GTP to 7,8-dihydroneopterin triphosphate. The polypeptide is GTP cyclohydrolase FolE2 (Neisseria meningitidis serogroup C (strain 053442)).